The following is a 290-amino-acid chain: Xyloglucan endotransglucosylase/hydrolase protein 9 (290 aa).

The signal sequence occupies residues 1–26; that stretch reads MVGMDLFKCVMMIMVLVVSCGEAVSG. The GH16 domain maps to 27 to 215; it reads AKFDELYRSS…WSHAPFVASY (189 aa). Asparagine 55 is a glycosylation site (N-linked (GlcNAc...) asparagine). Catalysis depends on glutamate 101, which acts as the Nucleophile. Glutamate 105 acts as the Proton donor in catalysis. Position 105 (glutamate 105) interacts with xyloglucan. Asparagine 109 is a glycosylation site (N-linked (GlcNAc...) asparagine). Xyloglucan-binding positions include 118–120, 128–130, 194–195, and glycine 199; these read QTN, NRE, and DW. Disulfide bonds link cysteine 223–cysteine 234 and cysteine 271–cysteine 284. Arginine 276 contributes to the xyloglucan binding site.

It belongs to the glycosyl hydrolase 16 family. XTH group 1 subfamily. Contains at least one intrachain disulfide bond essential for its enzymatic activity. Highly expressed in shoot apices. In the vegetative and reproductive phases, it accumulates in the shoot apex region, where cell division is most active. In the reproductive phase, it is also expressed in flower buds, flower stalks and internodes bearing flowers.

The protein localises to the secreted. It is found in the cell wall. The protein resides in the extracellular space. It localises to the apoplast. It carries out the reaction breaks a beta-(1-&gt;4) bond in the backbone of a xyloglucan and transfers the xyloglucanyl segment on to O-4 of the non-reducing terminal glucose residue of an acceptor, which can be a xyloglucan or an oligosaccharide of xyloglucan.. In terms of biological role, catalyzes xyloglucan endohydrolysis (XEH) and/or endotransglycosylation (XET). Cleaves and religates xyloglucan polymers, an essential constituent of the primary cell wall, and thereby participates in cell wall construction of growing tissues. Involved in internodal cell elongation. The protein is Xyloglucan endotransglucosylase/hydrolase protein 9 (XTH9) of Arabidopsis thaliana (Mouse-ear cress).